The sequence spans 62 residues: Short neurotoxin C (62 aa).

The segment covering 1–16 has biased composition (polar residues); the sequence is RRCFNQQSSQPQTNKS. The interval 1 to 21 is disordered; the sequence is RRCFNQQSSQPQTNKSCPPGE. Cystine bridges form between Cys3/Cys24, Cys17/Cys41, Cys43/Cys54, and Cys55/Cys60.

The protein belongs to the three-finger toxin family. Short-chain subfamily. Type I alpha-neurotoxin sub-subfamily. In terms of tissue distribution, expressed by the venom gland.

It localises to the secreted. Binds to muscle nicotinic acetylcholine receptor (nAChR) and inhibit acetylcholine from binding to the receptor, thereby impairing neuromuscular transmission. The protein is Short neurotoxin C of Laticauda crockeri (Crocker's sea snake).